A 424-amino-acid polypeptide reads, in one-letter code: PDZ and LIM domain protein 7 (424 aa).

The PDZ domain maps to 1–85; sequence MDSFKVVLEG…RLSLSLSRAQ (85 aa). The residue at position 78 (S78) is a Phosphoserine. Residues 81–98 are compositionally biased toward polar residues; sequence LSRAQPAQSKPQKVQTPD. The disordered stretch occupies residues 81–221; that stretch reads LSRAQPAQSK…HTQPATPTPM (141 aa). At T96 the chain carries Phosphothreonine. Basic and acidic residues predominate over residues 110-123; the sequence is SKQRLMEDTEDWRP. The span at 174-187 shows a compositional bias: pro residues; it reads EPWPGPTTPSPTSR. Residues 204–221 are compositionally biased toward polar residues; sequence KTSTVLTRHTQPATPTPM. LIM zinc-binding domains follow at residues 247 to 305, 306 to 365, and 366 to 424; these read PVCH…VRYA, PSCA…MFGT, and KCRG…FSHV.

In terms of assembly, binds via its LIM zinc-binding 3 domain (LIM 3) domain to endocytic codes of INSR, but not with those of IGF1R, LDLR, TFRC, or EGFR. Interacts with various PKC isoforms through the LIM zinc-binding domains. Binds to RET in a phosphorylation-independent manner via its LIM zinc-binding 2 domain (LIM 2). Probably part of a complex with SHC and the RET dimer. Interacts with TPM2, TBX4 and TBX5.

The protein resides in the cytoplasm. The protein localises to the cytoskeleton. Functionally, may function as a scaffold on which the coordinated assembly of proteins can occur. May play a role as an adapter that, via its PDZ domain, localizes LIM-binding proteins to actin filaments of both skeletal muscle and nonmuscle tissues. Involved in both of the two fundamental mechanisms of bone formation, direct bone formation (e.g. embryonic flat bones mandible and cranium), and endochondral bone formation (e.g. embryonic long bone development). Plays a role during fracture repair. Involved in BMP6 signaling pathway. The polypeptide is PDZ and LIM domain protein 7 (PDLIM7) (Bos taurus (Bovine)).